An 86-amino-acid polypeptide reads, in one-letter code: MERNQRKTLVGRVVSDKMDKTITVVVETKRNHPVYGKRINYSKKYKAHDENNVAKEGDIVRIMETRPLSATKHFRLVEVVEEAVII.

It belongs to the universal ribosomal protein uS17 family. Part of the 30S ribosomal subunit.

In terms of biological role, one of the primary rRNA binding proteins, it binds specifically to the 5'-end of 16S ribosomal RNA. The chain is Small ribosomal subunit protein uS17 from Streptococcus thermophilus (strain CNRZ 1066).